The following is a 341-amino-acid chain: 2-dehydro-3-deoxy-L-galactonate 5-dehydrogenase (341 aa).

C37 is a binding site for Zn(2+). Residues T39 and H42 each act as charge relay system in the active site. 6 residues coordinate Zn(2+): H60, E61, C90, C93, C96, and C104.

It belongs to the zinc-containing alcohol dehydrogenase family. The cofactor is Zn(2+).

It carries out the reaction 2-dehydro-3-deoxy-L-galactonate + NAD(+) = 3-deoxy-D-glycero-2,5-hexodiulosonate + NADH + H(+). In terms of biological role, involved in the degradation of 3,6-anhydro-L-galactose, which is the major monomeric sugar of red macroalgae. Catalyzes the third step of the pathway, the NAD(+)-dependent oxidation of 2-dehydro-3-deoxy-L-galactonate (L-KDGal) to 3-deoxy-D-glycero-2,5-hexodiulosonate (L-DDGal). The polypeptide is 2-dehydro-3-deoxy-L-galactonate 5-dehydrogenase (Pseudoalteromonas atlantica (strain T6c / ATCC BAA-1087)).